Reading from the N-terminus, the 157-residue chain is Ribosomal RNA large subunit methyltransferase H (157 aa).

S-adenosyl-L-methionine is bound by residues L74, G106, and 125–130; that span reads LGNITF.

This sequence belongs to the RNA methyltransferase RlmH family. In terms of assembly, homodimer.

It is found in the cytoplasm. It catalyses the reaction pseudouridine(1915) in 23S rRNA + S-adenosyl-L-methionine = N(3)-methylpseudouridine(1915) in 23S rRNA + S-adenosyl-L-homocysteine + H(+). In terms of biological role, specifically methylates the pseudouridine at position 1915 (m3Psi1915) in 23S rRNA. In Lawsonia intracellularis (strain PHE/MN1-00), this protein is Ribosomal RNA large subunit methyltransferase H.